The following is a 127-amino-acid chain: Classical arabinogalactan protein 10 (127 aa).

The signal sequence occupies residues 1–21; it reads MASKSVVVLLFLALIASSAIA. Position 22 is a pyrrolidone carboxylic acid (Q22). Residues 22-107 are disordered; the sequence is QAPGPAPTRS…TGSTPVDNNN (86 aa). P24, P26, P28, P32, and P36 each carry 4-hydroxyproline. 5 O-linked (Ara...) hydroxyproline glycosylation sites follow: P24, P26, P28, P32, and P36. Pro residues-rich tracts occupy residues 25–39, 48–58, and 66–86; these read GPAP…PAQP, SITPTPTPTPS, and VSPP…PPTS. Residues 98–107 are compositionally biased toward polar residues; sequence TGSTPVDNNN. N107 is lipidated: GPI-anchor amidated asparagine. The propeptide at 108-127 is removed in mature form; the sequence is AATLAAGSLAGFVFVASLLL.

The protein belongs to the classical AGP family. Post-translationally, O-glycosylated on hydroxyprolines; noncontiguous hydroxylproline residues are glycosylated with arabinogalactan. Predominantly expressed in flowers and at a lower level in roots and siliques.

The protein localises to the cell membrane. Its function is as follows. Proteoglycan that seems to be implicated in diverse developmental roles such as differentiation, cell-cell recognition, embryogenesis and programmed cell death. This Arabidopsis thaliana (Mouse-ear cress) protein is Classical arabinogalactan protein 10 (AGP10).